We begin with the raw amino-acid sequence, 549 residues long: Hydroxylamine reductase (549 aa).

Positions 5, 8, 17, and 23 each coordinate [4Fe-4S] cluster. Hybrid [4Fe-2O-2S] cluster contacts are provided by histidine 242, glutamate 266, cysteine 310, cysteine 402, cysteine 430, cysteine 455, glutamate 490, and lysine 492. Cysteine 402 is modified (cysteine persulfide).

The protein belongs to the HCP family. The cofactor is [4Fe-4S] cluster. Hybrid [4Fe-2O-2S] cluster is required as a cofactor.

It localises to the cytoplasm. It catalyses the reaction A + NH4(+) + H2O = hydroxylamine + AH2 + H(+). Functionally, catalyzes the reduction of hydroxylamine to form NH(3) and H(2)O. This chain is Hydroxylamine reductase, found in Clostridium novyi (strain NT).